Here is a 20-residue protein sequence, read N- to C-terminus: T cell receptor alpha joining 3 (20 aa).

Alpha-beta TR is a heterodimer composed of an alpha and beta chain; disulfide-linked. The alpha-beta TR is associated with the transmembrane signaling CD3 coreceptor proteins to form the TR-CD3 (TcR or TCR). The assembly of alpha-beta TR heterodimers with CD3 occurs in the endoplasmic reticulum where a single alpha-beta TR heterodimer associates with one CD3D-CD3E heterodimer, one CD3G-CD3E heterodimer and one CD247 homodimer forming a stable octameric structure. CD3D-CD3E and CD3G-CD3E heterodimers preferentially associate with TR alpha and TR beta chains, respectively. The association of the CD247 homodimer is the last step of TcR assembly in the endoplasmic reticulum and is required for transport to the cell surface.

It is found in the cell membrane. Functionally, j region of the variable domain of T cell receptor (TR) alpha chain that participates in the antigen recognition. Alpha-beta T cell receptors are antigen specific receptors which are essential to the immune response and are present on the cell surface of T lymphocytes. Recognize peptide-major histocompatibility (MH) (pMH) complexes that are displayed by antigen presenting cells (APC), a prerequisite for efficient T cell adaptive immunity against pathogens. Binding of alpha-beta TR to pMH complex initiates TR-CD3 clustering on the cell surface and intracellular activation of LCK that phosphorylates the ITAM motifs of CD3G, CD3D, CD3E and CD247 enabling the recruitment of ZAP70. In turn ZAP70 phosphorylates LAT, which recruits numerous signaling molecules to form the LAT signalosome. The LAT signalosome propagates signal branching to three major signaling pathways, the calcium, the mitogen-activated protein kinase (MAPK) kinase and the nuclear factor NF-kappa-B (NF-kB) pathways, leading to the mobilization of transcription factors that are critical for gene expression and essential for T cell growth and differentiation. The T cell repertoire is generated in the thymus, by V-(D)-J rearrangement. This repertoire is then shaped by intrathymic selection events to generate a peripheral T cell pool of self-MH restricted, non-autoaggressive T cells. Post-thymic interaction of alpha-beta TR with the pMH complexes shapes TR structural and functional avidity. The sequence is that of T cell receptor alpha joining 3 from Homo sapiens (Human).